Reading from the N-terminus, the 480-residue chain is Probable histone deacetylase 1-B (480 aa).

A histone deacetylase region spans residues 10-321 (KVCYYYDGDV…WTYETAVALD (312 aa)). Residue His-141 is part of the active site. Residues 387–480 (DSVHDDSGEE…KRVKEETKSV (94 aa)) form a disordered region. Residues 401–416 (PDKRISIRSSDKRIAC) show a composition bias toward basic and acidic residues. Acidic residues predominate over residues 417–427 (DEEFSDSEDEG). Residues 443-480 (VKTEEEKEGEDKKDVKEEEKAKDEKTDSKRVKEETKSV) show a composition bias toward basic and acidic residues.

The protein belongs to the histone deacetylase family. HD type 1 subfamily. In terms of assembly, found in a large complex with RBBP4 and MI-2.

It localises to the nucleus. Its subcellular location is the cytoplasm. The catalysed reaction is N(6)-acetyl-L-lysyl-[histone] + H2O = L-lysyl-[histone] + acetate. It carries out the reaction N(6)-acetyl-L-lysyl-[protein] + H2O = L-lysyl-[protein] + acetate. It catalyses the reaction N(6)-(2E)-butenoyl-L-lysyl-[protein] + H2O = (2E)-2-butenoate + L-lysyl-[protein]. In terms of biological role, histone deacetylase that catalyzes the deacetylation of lysine residues on the N-terminal part of the core histones (H2A, H2B, H3 and H4). Histone deacetylation gives a tag for epigenetic repression and plays an important role in transcriptional regulation, cell cycle progression and developmental events. Histone deacetylases act via the formation of large multiprotein complexes. Also functions as a deacetylase for non-histone proteins. In addition to protein deacetylase activity, also has protein-lysine deacylase activity: acts as a protein decrotonylase by mediating decrotonylation ((2E)-butenoyl) of histones. The sequence is that of Probable histone deacetylase 1-B (hdac1-b) from Xenopus laevis (African clawed frog).